The following is a 139-amino-acid chain: Ribosome-binding factor A (139 aa).

A disordered region spans residues proline 120–glutamate 139. Over residues aspartate 128–glutamate 139 the composition is skewed to acidic residues.

This sequence belongs to the RbfA family. As to quaternary structure, monomer. Binds 30S ribosomal subunits, but not 50S ribosomal subunits or 70S ribosomes.

It localises to the cytoplasm. One of several proteins that assist in the late maturation steps of the functional core of the 30S ribosomal subunit. Associates with free 30S ribosomal subunits (but not with 30S subunits that are part of 70S ribosomes or polysomes). Required for efficient processing of 16S rRNA. May interact with the 5'-terminal helix region of 16S rRNA. The protein is Ribosome-binding factor A of Nostoc punctiforme (strain ATCC 29133 / PCC 73102).